The following is a 716-amino-acid chain: MDVELEVSGFIQRLRHSRLRGLLVVGTGDVKAWAEKLAGYAGGDCALVSPSAGRLPGICRSWAPPGSIERILGGEYAAAIIAVPGLLRPSIIAGAGETVRSGGFLAIVADPPDRWDPGPPRGTGLYREYLFSAIRDNPVHLWIDDESGRIVSESFLEYTGVGAQGWSPGRYKPSPGSGVPRRLVSACRSESQARALESLARFFRGRWRSALVRGDRGRGKSYVIGLALAYAAWRRLIGRAVLVGPTPLSVQSVMAGLLRGLDVLGLKGHRVVRTSGGEVIRVSGPWFRIAYEQPDTAEPSPLVVVDEAAAVGVARVRRLSWRSGKSLVATTIHGYEGSGRAFARLLPNILPKPFIELELREPIRYLPGDPLEEWLYTVFMLRAEPQEPGDPSAARPVEVSREVLARDREVLRSVYGILVQAHYRNTPDDLLAMLESPHHRIYALEADGTPVAVADVVLEGPDVEEEARIALERLLYMAGSPGSGVVSWRVSRIAVHEDLQRRGLGSRLLRHVEAQARESGASLVTTMFSRHDVIPFWLKNGFKPFYVSPRYNRVTGEKNVALAKPLDSAGAEILEKASKTLALKLALAGSSIYRDLAAEKLALLLHHTPATAPPLYLTRIQARHLEGFLKGEVMADQAFDAVYIALLSTLLATRSWNPVEPGLVGAVARVVQGKPYSEVASIIGASTVDEAVGKVEEYIRGILEGARSLWSGRVIP.

Residues glutamine 192, 217 to 226 (GRGKSYVIGL), and arginine 364 contribute to the ATP site. Residues 401 to 567 (REVLARDREV…KNVALAKPLD (167 aa)) enclose the N-acetyltransferase domain. Acetyl-CoA contacts are provided by residues 493–495 (IAV) and 500–506 (QRRGLGS).

Belongs to the RNA cytidine acetyltransferase family. TmcA subfamily.

It localises to the cytoplasm. It carries out the reaction cytidine(34) in elongator tRNA(Met) + acetyl-CoA + ATP + H2O = N(4)-acetylcytidine(34) in elongator tRNA(Met) + ADP + phosphate + CoA + H(+). Catalyzes the formation of N(4)-acetylcytidine (ac(4)C) at the wobble position of tRNA(Met), by using acetyl-CoA as an acetyl donor and ATP (or GTP). This Aeropyrum pernix (strain ATCC 700893 / DSM 11879 / JCM 9820 / NBRC 100138 / K1) protein is tRNA(Met) cytidine acetyltransferase TmcA.